A 92-amino-acid chain; its full sequence is Small ribosomal subunit protein uS19c (92 aa).

It belongs to the universal ribosomal protein uS19 family.

The protein resides in the plastid. Its subcellular location is the chloroplast. In terms of biological role, protein S19 forms a complex with S13 that binds strongly to the 16S ribosomal RNA. This chain is Small ribosomal subunit protein uS19c, found in Piper cenocladum (Ant piper).